The primary structure comprises 469 residues: MDIENEQTLNVNPTDPDNLSDSLFSGDEENAGTEEIKNEINGNWISASTINEARINAKAKRRLRKNSSRDSGRGDSVSDNGSEAVRSGVAVPTSPKGRLLDRRSRSGKGRGLPKKGGAGGKGVWGTPGQVYDVEEVDVKDPNYDDDQENCVYETVVLPLDETAFEKTLTPIIQEYFEHGDTNEVAEMLRDLNLGEMKSGVPVLAVSLALEGKASHREMTSKLLSDLCGTVMSTNDVEKSFDKLLKDLPELALDTPRAPQLVGQFIARAVGDGILCNTYIDSYKGTVDCVQARAALDKATVLLSMSKGGKRKDSVWGSGGGQQPVNHLVKEIDMLLKEYLLSGDISEAEHCLKELEVPHFHHELVYEAIVMVLESTGESAFKMILDLLKSLWKSSTITIDQMKRGYERIYNEIPDINLDVPHSYSVLERFVEECFQAGIISKQLRDLCPSRGRKRFVSEGDGGRLKPESY.

N-acetylmethionine is present on Met-1. Polar residues predominate over residues 1–23 (MDIENEQTLNVNPTDPDNLSDSL). Disordered stretches follow at residues 1 to 37 (MDIENEQTLNVNPTDPDNLSDSLFSGDEENAGTEEIK) and 58 to 128 (KAKR…GTPG). Ser-25 carries the post-translational modification Phosphoserine. Residues 58–64 (KAKRRLR) carry the Nuclear localization signal motif. A Phosphoserine; by PKB and RPS6KB1 modification is found at Ser-67. Ser-68, Ser-71, Ser-76, Ser-78, and Ser-94 each carry phosphoserine. The Phosphodegron motif lies at 70 to 76 (DSGRGDS). Residues 114–125 (KKGGAGGKGVWG) are compositionally biased toward gly residues. Position 152 is a phosphotyrosine (Tyr-152). The region spanning 163 to 284 (AFEKTLTPII…CNTYIDSYKG (122 aa)) is the MI 1 domain. Phosphoserine is present on residues Ser-313 and Ser-317. One can recognise an MI 2 domain in the interval 326–449 (HLVKEIDMLL…SKQLRDLCPS (124 aa)). The short motif at 448-454 (PSRGRKR) is the Nuclear localization signal element. Ser-457 carries the phosphoserine; by PKB modification.

It belongs to the PDCD4 family. In terms of assembly, interacts (via MI domains) with EIF4A1 and EIF4A2 (via N-terminal domain). Heterotrimer with EIF4A1; one molecule of PDCD4 binds two molecules of EIF4A1. Interacts with EIF4G1. May form a complex with EIF4A1 and EIF4G1. The interaction between PDCD4 and EIF4A1 interferes with the interaction between EIF4A1 and EIF4G. When phosphorylated, interacts with BTRC and FBXW11. In terms of processing, polyubiquitinated, leading to its proteasomal degradation. Rapidly degraded in response to mitogens. Phosphorylation of the phosphodegron promotes interaction with BTRC and proteasomal degradation. Phosphorylated at Ser-67 by RPS6KB1 in response to mitogens; phosphorylation promotes proteasomal degradation of PDCD4. As to expression, expressed ubiquitously. Highyly expressed in thymus and liver. Moderately expressed in brain, kidney and spleen; weakly in lung and heart. Expression is up- or down-regulated in response to apoptosis inducers. Regulated by many programmed cell death-inducing stimuli.

The protein localises to the nucleus. It is found in the cytoplasm. Inhibits translation initiation and cap-dependent translation. May excert its function by hindering the interaction between EIF4A1 and EIF4G. Inhibits the helicase activity of EIF4A. Modulates the activation of JUN kinase. Down-regulates the expression of MAP4K1, thus inhibiting events important in driving invasion, namely, MAPK85 activation and consequent JUN-dependent transcription. May play a role in apoptosis. Tumor suppressor. Inhibits tumor promoter-induced neoplastic transformation. Binds RNA. This chain is Programmed cell death protein 4 (Pdcd4), found in Mus musculus (Mouse).